Here is a 983-residue protein sequence, read N- to C-terminus: Glycine dehydrogenase (decarboxylating) (983 aa).

Lysine 726 carries the N6-(pyridoxal phosphate)lysine modification.

It belongs to the GcvP family. As to quaternary structure, the glycine cleavage system is composed of four proteins: P, T, L and H. Requires pyridoxal 5'-phosphate as cofactor.

The catalysed reaction is N(6)-[(R)-lipoyl]-L-lysyl-[glycine-cleavage complex H protein] + glycine + H(+) = N(6)-[(R)-S(8)-aminomethyldihydrolipoyl]-L-lysyl-[glycine-cleavage complex H protein] + CO2. Its function is as follows. The glycine cleavage system catalyzes the degradation of glycine. The P protein binds the alpha-amino group of glycine through its pyridoxal phosphate cofactor; CO(2) is released and the remaining methylamine moiety is then transferred to the lipoamide cofactor of the H protein. This Synechocystis sp. (strain ATCC 27184 / PCC 6803 / Kazusa) protein is Glycine dehydrogenase (decarboxylating).